The primary structure comprises 276 residues: Hemin import ATP-binding protein HmuV (276 aa).

The 258-residue stretch at 2–259 (LTAHHLDVAR…AHIAQCYGFA (258 aa)) folds into the ABC transporter domain. 34–41 (GRNGAGKS) serves as a coordination point for ATP.

It belongs to the ABC transporter superfamily. Heme (hemin) importer (TC 3.A.1.14.5) family. The complex is composed of two ATP-binding proteins (HmuV), two transmembrane proteins (HmuU) and a solute-binding protein (HmuT).

The protein localises to the cell inner membrane. Functionally, part of the ABC transporter complex HmuTUV involved in hemin import. Responsible for energy coupling to the transport system. The protein is Hemin import ATP-binding protein HmuV of Burkholderia cenocepacia (strain HI2424).